Here is a 215-residue protein sequence, read N- to C-terminus: Adenylate kinase (215 aa).

Position 10 to 15 (10 to 15 (GAGKGT)) interacts with ATP. The interval 30–59 (STGDMLRAAVKAGSPLGQQVKGVMDSGGLV) is NMP. AMP-binding positions include Thr-31, Arg-36, 57 to 59 (GLV), 85 to 88 (GFPR), and Gln-92. The LID stretch occupies residues 122-159 (GRRVHPASGRVYHTEHNPPKVAGKDDVTGEDLIQREDD). ATP is bound by residues Arg-123 and 132–133 (VY). Residues Arg-156 and Arg-167 each coordinate AMP. Position 201 (Gly-201) interacts with ATP.

It belongs to the adenylate kinase family. As to quaternary structure, monomer.

It localises to the cytoplasm. The enzyme catalyses AMP + ATP = 2 ADP. The protein operates within purine metabolism; AMP biosynthesis via salvage pathway; AMP from ADP: step 1/1. Catalyzes the reversible transfer of the terminal phosphate group between ATP and AMP. Plays an important role in cellular energy homeostasis and in adenine nucleotide metabolism. The chain is Adenylate kinase from Pseudomonas paraeruginosa (strain DSM 24068 / PA7) (Pseudomonas aeruginosa (strain PA7)).